Reading from the N-terminus, the 352-residue chain is tRNA pseudouridine synthase D (352 aa).

The active-site Nucleophile is aspartate 81. The TRUD domain maps to 157 to 303; sequence GIPNYFGAQR…MEHERRILRL (147 aa).

This sequence belongs to the pseudouridine synthase TruD family.

The enzyme catalyses uridine(13) in tRNA = pseudouridine(13) in tRNA. In terms of biological role, responsible for synthesis of pseudouridine from uracil-13 in transfer RNAs. The polypeptide is tRNA pseudouridine synthase D (Pseudomonas syringae pv. syringae (strain B728a)).